Consider the following 618-residue polypeptide: Probable N-acetylgalactosaminyltransferase 6 (618 aa).

Residues 1 to 16 (MIASLIRSRRRSRRCV) lie on the Cytoplasmic side of the membrane. The helical; Signal-anchor for type II membrane protein transmembrane segment at 17 to 39 (VYSVFLFGFLALWGSFALALVFL) threads the bilayer. Residues 40–618 (SDMYIGEDQI…TEMSWLPEHP (579 aa)) are Lumenal-facing. Asparagine 81 and asparagine 149 each carry an N-linked (GlcNAc...) asparagine glycan. 2 cysteine pairs are disulfide-bonded: cysteine 147-cysteine 381 and cysteine 372-cysteine 452. The interval 156–267 (LPTTSVIIVY…KGWLEPLLTR (112 aa)) is catalytic subdomain A. Substrate is bound by residues aspartate 197 and arginine 228. Aspartate 251 provides a ligand contact to Mn(2+). Serine 252 contacts substrate. Histidine 253 lines the Mn(2+) pocket. Positions 327–389 (PIESPTMAGG…PCSHVGHVFR (63 aa)) are catalytic subdomain B. Tryptophan 358 lines the substrate pocket. Histidine 386 provides a ligand contact to Mn(2+). Arginine 389 contacts substrate. Residues 474-609 (RFGRMTSSSN…SNDRQNWTIT (136 aa)) form the Ricin B-type lectin domain. N-linked (GlcNAc...) asparagine glycosylation is present at asparagine 483. 3 disulfides stabilise this stretch: cysteine 487–cysteine 505, cysteine 530–cysteine 550, and cysteine 575–cysteine 597. N-linked (GlcNAc...) asparagine glycosylation is present at asparagine 605.

It belongs to the glycosyltransferase 2 family. GalNAc-T subfamily. The cofactor is Mn(2+).

It is found in the golgi apparatus membrane. It functions in the pathway protein modification; protein glycosylation. Functionally, probable glycopeptide transferase involved in O-linked oligosaccharide biosynthesis. Glycopeptide transferases catalyze the transfer of an N-acetyl-D-galactosamine residue to an already glycosylated peptide. In contrast to other members of the family, it does not act as a peptide transferase that transfers GalNAc onto serine or threonine residue on peptides that have been tested. Some peptide transferase activity is however not excluded, considering that its appropriate peptide substrate may remain unidentified. The polypeptide is Probable N-acetylgalactosaminyltransferase 6 (gly-6) (Caenorhabditis elegans).